Reading from the N-terminus, the 210-residue chain is ATP-dependent Clp protease proteolytic subunit (210 aa).

The Nucleophile role is filled by Ser-107. The active site involves His-132.

It belongs to the peptidase S14 family. As to quaternary structure, fourteen ClpP subunits assemble into 2 heptameric rings which stack back to back to give a disk-like structure with a central cavity, resembling the structure of eukaryotic proteasomes.

The protein resides in the cytoplasm. It carries out the reaction Hydrolysis of proteins to small peptides in the presence of ATP and magnesium. alpha-casein is the usual test substrate. In the absence of ATP, only oligopeptides shorter than five residues are hydrolyzed (such as succinyl-Leu-Tyr-|-NHMec, and Leu-Tyr-Leu-|-Tyr-Trp, in which cleavage of the -Tyr-|-Leu- and -Tyr-|-Trp bonds also occurs).. Functionally, cleaves peptides in various proteins in a process that requires ATP hydrolysis. Has a chymotrypsin-like activity. Plays a major role in the degradation of misfolded proteins. The protein is ATP-dependent Clp protease proteolytic subunit of Zymomonas mobilis subsp. mobilis (strain ATCC 31821 / ZM4 / CP4).